Reading from the N-terminus, the 368-residue chain is MSKRDYYQVLGVPRTASEDDLKKAYRRCAMKYHPDRNPGDAAAEAAFKECKEAYEVLADTKKRKLYDTHGHAAFEHGVGGGNAPDMNDIFGDIFGNIFGGARASRRGADVGYMVELDLEEAVAGVERQIQIPTLVECTHCHGSGSEDGHVETCGTCRGSGQVRIQRGIFAMQQTCPHCGGRGVIIRNPCKVCNGAGRVEDHKTLSVKIPAGVDNGDRIRLSGEGEQGPEGVPPGDLYVEVRVREHPIFQRDGDDLHCEVPVRISQAALGDIVRVATLDGEAEIRIPAETQSGKLFRLRGKGVRSVRSRTEGDLYCRIVVETPVNLTAEQRKLLEQFEMTFAGEDARKHSPKSATFLDGVKSFWDRMTS.

One can recognise a J domain in the interval Asp-5–Gly-70. A CR-type zinc finger spans residues Gly-124 to His-201. Residues Cys-137, Cys-140, Cys-153, Cys-156, Cys-175, Cys-178, Cys-189, and Cys-192 each coordinate Zn(2+). 4 CXXCXGXG motif repeats span residues Cys-137–Gly-144, Cys-153–Gly-160, Cys-175–Gly-182, and Cys-189–Gly-196.

This sequence belongs to the DnaJ family. As to quaternary structure, homodimer. Zn(2+) is required as a cofactor.

The protein localises to the cytoplasm. In terms of biological role, participates actively in the response to hyperosmotic and heat shock by preventing the aggregation of stress-denatured proteins and by disaggregating proteins, also in an autonomous, DnaK-independent fashion. Unfolded proteins bind initially to DnaJ; upon interaction with the DnaJ-bound protein, DnaK hydrolyzes its bound ATP, resulting in the formation of a stable complex. GrpE releases ADP from DnaK; ATP binding to DnaK triggers the release of the substrate protein, thus completing the reaction cycle. Several rounds of ATP-dependent interactions between DnaJ, DnaK and GrpE are required for fully efficient folding. Also involved, together with DnaK and GrpE, in the DNA replication of plasmids through activation of initiation proteins. The chain is Chaperone protein DnaJ from Xylella fastidiosa (strain 9a5c).